The primary structure comprises 101 residues: UPF0235 protein Cpha266_2081 (101 aa).

The protein belongs to the UPF0235 family.

The chain is UPF0235 protein Cpha266_2081 from Chlorobium phaeobacteroides (strain DSM 266 / SMG 266 / 2430).